Here is a 928-residue protein sequence, read N- to C-terminus: Protein NETWORKED 2B (928 aa).

One can recognise an NAB domain in the interval 10-90 (YSWWWASHIR…ERYDHLSTEL (81 aa)). Residues 108–144 (PLVDDDDDDDDDNPKKPPKHLHLIPSGTNIPQVPEVP) are disordered. A compositionally biased stretch (acidic residues) spans 110-119 (VDDDDDDDDD). Coiled coils occupy residues 207–309 (SYEQ…AKKA) and 360–445 (ALLK…VKMD). Disordered regions lie at residues 447–472 (DVEG…SISN) and 489–529 (KQSR…EERR). Acidic residues predominate over residues 457–468 (DIQEEDTVEDSD). Over residues 489–506 (KQSRDQESMQEEKSETRD) the composition is skewed to basic and acidic residues. Residues 547 to 574 (LLDEYSSVLRDYREVKRKLSEVEKKNRD) are a coiled coil. Residues 620-651 (AESVSISHSSNSSFSMPPLPQRGDLKRASEQE) form a disordered region. Residues 622-634 (SVSISHSSNSSFS) show a composition bias toward low complexity. The span at 642–651 (GDLKRASEQE) shows a compositional bias: basic and acidic residues.

It belongs to the NET family.

Functionally, plant-specific actin binding protein. May be part of a membrane-cytoskeletal adapter complex. The chain is Protein NETWORKED 2B from Arabidopsis thaliana (Mouse-ear cress).